The chain runs to 485 residues: Cyclic GMP-AMP synthase-like receptor (485 aa).

ATP is bound by residues S70 and 82–84 (EYD). Mg(2+) is bound by residues E82, D84, and D204. Residues D204 and 247 to 254 (RLSFYEQE) each bind GTP. Residues K271 and K274 each coordinate ATP. Mn(2+) contacts are provided by I298 and D304.

This sequence belongs to the mab-21 family. The cofactor is Mg(2+). Requires Mn(2+) as cofactor.

It catalyses the reaction GTP + ATP = 2',3'-cGAMP + 2 diphosphate. The enzyme catalyses GTP + ATP = pppGp(2'-5')A + diphosphate. It carries out the reaction pppGp(2'-5')A = 2',3'-cGAMP + diphosphate. Functionally, nucleotidyltransferase that catalyzes the formation of cyclic GMP-AMP (2',3'-cGAMP) from ATP and GTP and plays a key role in innate immunity. Directly binds some unknown ligand, activating the nucleotidyltransferase activity, leading to synthesis of 2',3'-cGAMP, a second messenger that binds to and activates Sting, thereby triggering the immune response via activation of the NF-kappa-B transcription factor. The chain is Cyclic GMP-AMP synthase-like receptor from Trichogramma pretiosum (Parasitoid wasp).